A 361-amino-acid polypeptide reads, in one-letter code: Histidinol-phosphate aminotransferase (361 aa).

Residue Lys-216 is modified to N6-(pyridoxal phosphate)lysine.

Belongs to the class-II pyridoxal-phosphate-dependent aminotransferase family. Histidinol-phosphate aminotransferase subfamily. In terms of assembly, homodimer. Pyridoxal 5'-phosphate is required as a cofactor.

It catalyses the reaction L-histidinol phosphate + 2-oxoglutarate = 3-(imidazol-4-yl)-2-oxopropyl phosphate + L-glutamate. It participates in amino-acid biosynthesis; L-histidine biosynthesis; L-histidine from 5-phospho-alpha-D-ribose 1-diphosphate: step 7/9. This Francisella philomiragia subsp. philomiragia (strain ATCC 25017 / CCUG 19701 / FSC 153 / O#319-036) protein is Histidinol-phosphate aminotransferase.